The sequence spans 126 residues: Fluoride-specific ion channel FluC (126 aa).

The next 4 membrane-spanning stretches (helical) occupy residues 5 to 25, 36 to 56, 69 to 89, and 99 to 119; these read GFVA…FFSV, YGTL…VAFF, LAVT…SEVI, and WAML…AFGI. Residues Gly76 and Thr79 each contribute to the Na(+) site.

It belongs to the fluoride channel Fluc/FEX (TC 1.A.43) family.

It localises to the cell inner membrane. It carries out the reaction fluoride(in) = fluoride(out). With respect to regulation, na(+) is not transported, but it plays an essential structural role and its presence is essential for fluoride channel function. Its function is as follows. Fluoride-specific ion channel. Important for reducing fluoride concentration in the cell, thus reducing its toxicity. The polypeptide is Fluoride-specific ion channel FluC (Cupriavidus metallidurans (strain ATCC 43123 / DSM 2839 / NBRC 102507 / CH34) (Ralstonia metallidurans)).